Reading from the N-terminus, the 470-residue chain is Proline--tRNA ligase (470 aa).

Belongs to the class-II aminoacyl-tRNA synthetase family. ProS type 3 subfamily. Homodimer.

Its subcellular location is the cytoplasm. It carries out the reaction tRNA(Pro) + L-proline + ATP = L-prolyl-tRNA(Pro) + AMP + diphosphate. Catalyzes the attachment of proline to tRNA(Pro) in a two-step reaction: proline is first activated by ATP to form Pro-AMP and then transferred to the acceptor end of tRNA(Pro). In Malacoplasma penetrans (strain HF-2) (Mycoplasma penetrans), this protein is Proline--tRNA ligase.